A 326-amino-acid chain; its full sequence is GTPase Obg (326 aa).

Residues 1 to 159 (MKFVDSAKIY…LEIELELKLM (159 aa)) form the Obg domain. A disordered region spans residues 119 to 138 (EGGKGGKGNPHFASSTRQAP). An OBG-type G domain is found at 160 to 323 (ADVGLVGFPN…LKDELWSRVK (164 aa)). GTP is bound by residues 166–173 (GFPNAGKS), 191–195 (FTTLV), 213–216 (DIPG), 280–283 (TKMD), and 304–306 (SSV). Residues Ser-173 and Thr-193 each contribute to the Mg(2+) site.

The protein belongs to the TRAFAC class OBG-HflX-like GTPase superfamily. OBG GTPase family. In terms of assembly, monomer. Requires Mg(2+) as cofactor.

Its subcellular location is the cytoplasm. In terms of biological role, an essential GTPase which binds GTP, GDP and possibly (p)ppGpp with moderate affinity, with high nucleotide exchange rates and a fairly low GTP hydrolysis rate. Plays a role in control of the cell cycle, stress response, ribosome biogenesis and in those bacteria that undergo differentiation, in morphogenesis control. The sequence is that of GTPase Obg from Chlorobium phaeobacteroides (strain BS1).